Reading from the N-terminus, the 113-residue chain is UPF0342 protein SZO_10960 (113 aa).

This sequence belongs to the UPF0342 family.

This is UPF0342 protein SZO_10960 from Streptococcus equi subsp. zooepidemicus (strain H70).